Here is a 156-residue protein sequence, read N- to C-terminus: MRRRKAPVREVLPDPIYGNKIITKFINSLMYDGKKSVATEIMYGAIKAIEKKNAEVKGIDVFNDAIENVKPILEVKSRRVGGATYQVPVEVRPARQQALAIRWLITFARKRSERTMVDKLANELLDAANSKGASFKKKEDTYKMAEANKAFAHYRW.

It belongs to the universal ribosomal protein uS7 family. Part of the 30S ribosomal subunit. Contacts proteins S9 and S11.

One of the primary rRNA binding proteins, it binds directly to 16S rRNA where it nucleates assembly of the head domain of the 30S subunit. Is located at the subunit interface close to the decoding center, probably blocks exit of the E-site tRNA. The chain is Small ribosomal subunit protein uS7 from Campylobacter concisus (strain 13826).